A 60-amino-acid polypeptide reads, in one-letter code: Large ribosomal subunit protein bL32 (60 aa).

Residues 1 to 21 form a disordered region; the sequence is MAVPARHTSKAKKNKRRTHYK. The segment covering 7–20 has biased composition (basic residues); that stretch reads HTSKAKKNKRRTHY.

Belongs to the bacterial ribosomal protein bL32 family.

This Streptococcus thermophilus (strain ATCC BAA-250 / LMG 18311) protein is Large ribosomal subunit protein bL32.